The following is a 997-amino-acid chain: Mannuronan C5-epimerase AlgE2 (997 aa).

PbH1 repeat units follow at residues 133-155 (DRDV…DPHE), 157-179 (TINL…VADF), 180-202 (QIGG…NIVT), 204-226 (TNDF…VVQR), 257-279 (AHDV…RVYG), 280-315 (AEDV…GVSG), and 320-359 (TTGT…SVSN). Hemolysin-type calcium-binding repeat units follow at residues 388–403 (GTAG…AHET), 406–422 (GLDG…NDIL), 424–439 (GGAG…GADL), 557–573 (GHAG…DDIL), 574–591 (VGGA…ADVF), 696–711 (GSAG…ADEV), 713–730 (HGGG…ADVF), 828–839 (GGDGNDTLSGSS), 846–862 (GGVG…NDIL), and 864–880 (GGAG…SDIF).

Belongs to the D-mannuronate C5-epimerase family. Ca(2+) serves as cofactor.

The protein localises to the secreted. It carries out the reaction [(1-&gt;4)-beta-D-mannuronosyl](n) = [alginate](n). Its pathway is glycan biosynthesis; alginate biosynthesis. Its activity is regulated as follows. Inhibited by zinc. In terms of biological role, converts beta-D-mannuronic acid (M) to alpha-L-guluronic acid (G), producing a polymer with gel-forming capacity, required for the formation of the cyst coat. In Azotobacter vinelandii, this protein is Mannuronan C5-epimerase AlgE2.